The sequence spans 314 residues: Nodulation protein D 1 (314 aa).

Residues 6-63 form the HTH lysR-type domain; it reads LDLNLLVALDALMTERNLTAAARQINLSQPAMSAAIARLRSYFRDELFTMRGRELVPT. The H-T-H motif DNA-binding region spans 23–42; the sequence is LTAAARQINLSQPAMSAAIA.

Belongs to the LysR transcriptional regulatory family.

Its function is as follows. NodD regulates the expression of the nodABCFE genes which encode other nodulation proteins. NodD is also a negative regulator of its own expression. Binds flavonoids as inducers. The chain is Nodulation protein D 1 (nodD1) from Bradyrhizobium elkanii.